A 563-amino-acid polypeptide reads, in one-letter code: Alpha-humulene synthase (563 aa).

The Mg(2+) site is built by Asp316, Asp320, Asp461, and Glu469. Residues 316 to 320 (DDIYD) carry the DDXXD motif motif.

The protein belongs to the terpene synthase family. Tpsa subfamily. It depends on Mg(2+) as a cofactor. Requires Mn(2+) as cofactor. Expressed in trichomes, cones and young leaves.

The catalysed reaction is (2E,6E)-farnesyl diphosphate = alpha-humulene + diphosphate. Its pathway is sesquiterpene biosynthesis. It participates in secondary metabolite biosynthesis; terpenoid biosynthesis. In terms of biological role, sesquiterpene synthase that catalyzes the formation of alpha-humulene. Can use farnesyl diphosphate (FPP) as substrate, but not geranyl diphosphate (GPP) or geranylgeranyl diphosphate (GGPP). The sequence is that of Alpha-humulene synthase from Humulus lupulus (European hop).